A 190-amino-acid polypeptide reads, in one-letter code: Imidazoleglycerol-phosphate dehydratase (190 aa).

The protein belongs to the imidazoleglycerol-phosphate dehydratase family.

The protein localises to the cytoplasm. The enzyme catalyses D-erythro-1-(imidazol-4-yl)glycerol 3-phosphate = 3-(imidazol-4-yl)-2-oxopropyl phosphate + H2O. The protein operates within amino-acid biosynthesis; L-histidine biosynthesis; L-histidine from 5-phospho-alpha-D-ribose 1-diphosphate: step 6/9. The chain is Imidazoleglycerol-phosphate dehydratase from Campylobacter fetus subsp. fetus (strain 82-40).